The primary structure comprises 189 residues: 3-isopropylmalate dehydratase small subunit (189 aa).

The protein belongs to the LeuD family. LeuD type 1 subfamily. As to quaternary structure, heterodimer of LeuC and LeuD.

The enzyme catalyses (2R,3S)-3-isopropylmalate = (2S)-2-isopropylmalate. The protein operates within amino-acid biosynthesis; L-leucine biosynthesis; L-leucine from 3-methyl-2-oxobutanoate: step 2/4. In terms of biological role, catalyzes the isomerization between 2-isopropylmalate and 3-isopropylmalate, via the formation of 2-isopropylmaleate. In Francisella philomiragia subsp. philomiragia (strain ATCC 25017 / CCUG 19701 / FSC 153 / O#319-036), this protein is 3-isopropylmalate dehydratase small subunit.